A 326-amino-acid polypeptide reads, in one-letter code: MTKIRSVVLGCGSYLPEQVVTNAQLAARIDTSDEWIVQRTGIRERHIAAEGEFTSHLAIKAAQAALTDAGVDAQSIDLIVLATSTPDNTFPATAVAVQHGLGINHGAAFDLQAVCSGFVFALATADNFLRTGAFKRALVIGAETFSRILDWNDRGTCVLFGDGAGAVVLEAQEQPGSAATDRGVVTTHLRSDGRHKAKLFVDGGPSSTQTVGHLRMEGREVFKHAVGMITDVIVDAFEATGLNADSIDWFVPHQANKRIIDASAHKLHIAPEKVVLTVDRHGNTSAASIPLALAVARKDGRIKRGDLILLEAMGGGFTWGSALVRW.

Residues cysteine 115 and histidine 253 contribute to the active site. The segment at 254 to 258 (QANKR) is ACP-binding. Asparagine 283 is an active-site residue.

It belongs to the thiolase-like superfamily. FabH family. In terms of assembly, homodimer.

Its subcellular location is the cytoplasm. It carries out the reaction malonyl-[ACP] + acetyl-CoA + H(+) = 3-oxobutanoyl-[ACP] + CO2 + CoA. The protein operates within lipid metabolism; fatty acid biosynthesis. Its function is as follows. Catalyzes the condensation reaction of fatty acid synthesis by the addition to an acyl acceptor of two carbons from malonyl-ACP. Catalyzes the first condensation reaction which initiates fatty acid synthesis and may therefore play a role in governing the total rate of fatty acid production. Possesses both acetoacetyl-ACP synthase and acetyl transacylase activities. Its substrate specificity determines the biosynthesis of branched-chain and/or straight-chain of fatty acids. In Bradyrhizobium diazoefficiens (strain JCM 10833 / BCRC 13528 / IAM 13628 / NBRC 14792 / USDA 110), this protein is Beta-ketoacyl-[acyl-carrier-protein] synthase III.